Reading from the N-terminus, the 395-residue chain is Major outer membrane protein P.IA (395 aa).

A signal peptide spans 1–19 (MRKKLTALVLSALPLAAVA).

Belongs to the Gram-negative porin family. Homotrimer.

It is found in the cell outer membrane. Functionally, serves as a slightly cation selective porin. Major antigen on the gonococcal cell surface and it may have pathogenic properties in addition to its porin activity. The protein is Major outer membrane protein P.IA (porA) of Neisseria meningitidis serogroup A / serotype 4A (strain DSM 15465 / Z2491).